The sequence spans 739 residues: Polyribonucleotide nucleotidyltransferase (739 aa).

Mg(2+) is bound by residues Asp489 and Asp495. Residues Pro556 to Ile615 form the KH domain. In terms of domain architecture, S1 motif spans Asp625–Lys693. The disordered stretch occupies residues Pro699 to Lys739. The span at Glu722–Lys739 shows a compositional bias: basic and acidic residues.

It belongs to the polyribonucleotide nucleotidyltransferase family. The cofactor is Mg(2+).

It is found in the cytoplasm. The enzyme catalyses RNA(n+1) + phosphate = RNA(n) + a ribonucleoside 5'-diphosphate. Functionally, involved in mRNA degradation. Catalyzes the phosphorolysis of single-stranded polyribonucleotides processively in the 3'- to 5'-direction. The protein is Polyribonucleotide nucleotidyltransferase of Streptococcus suis (strain 98HAH33).